The chain runs to 356 residues: tRNA N6-adenosine threonylcarbamoyltransferase (356 aa).

Residues histidine 115 and histidine 119 each coordinate Fe cation. Substrate is bound by residues 138 to 142, aspartate 171, glycine 184, and asparagine 283; that span reads LVSGG. Aspartate 311 contributes to the Fe cation binding site.

It belongs to the KAE1 / TsaD family. Fe(2+) is required as a cofactor.

Its subcellular location is the cytoplasm. It carries out the reaction L-threonylcarbamoyladenylate + adenosine(37) in tRNA = N(6)-L-threonylcarbamoyladenosine(37) in tRNA + AMP + H(+). Required for the formation of a threonylcarbamoyl group on adenosine at position 37 (t(6)A37) in tRNAs that read codons beginning with adenine. Is involved in the transfer of the threonylcarbamoyl moiety of threonylcarbamoyl-AMP (TC-AMP) to the N6 group of A37, together with TsaE and TsaB. TsaD likely plays a direct catalytic role in this reaction. The chain is tRNA N6-adenosine threonylcarbamoyltransferase from Synechococcus sp. (strain WH7803).